The primary structure comprises 322 residues: Pyrroline-5-carboxylate reductase (322 aa).

2 helical membrane passes run 9–29 and 117–137; these read YPNVAILGCGKLGQALLVGLL and ILISLMGGVSPGLIVEALHFW. The interval 302-322 is disordered; sequence LSQSAGSHGEDNTTDSKTSRA. N-linked (GlcNAc...) asparagine glycosylation occurs at asparagine 313.

Belongs to the pyrroline-5-carboxylate reductase family.

It is found in the membrane. It carries out the reaction L-proline + NADP(+) = (S)-1-pyrroline-5-carboxylate + NADPH + 2 H(+). The catalysed reaction is L-proline + NAD(+) = (S)-1-pyrroline-5-carboxylate + NADH + 2 H(+). Its pathway is alkaloid biosynthesis. Its function is as follows. Pyrroline-5-carboxylate reductase; part of the gene cluster that mediates the biosynthesis of paraherquamide, a fungal indole alkaloid that belongs to a family of natural products containing a characteristic bicyclo[2.2.2]diazaoctane core. The first steps in the biosynthesis of paraherquamide is the production of the beta-methyl-proline precursor from L-isoleucine. They require oxidation of a terminally hydroxylated L-isoleucine to the corresponding aldehyde by enzymes which have still to be identified. Spontaneous cyclization and dehydration would yield the 4-methyl pyrolline-5-carboxylic acid, which is then reduced by the pyrroline-5-carboxylate reductase phqD leading to the beta-methyl-proline precursor. The next step of paraherquamide biosynthesis involves coupling of beta-methyl-proline and L-tryptophan by the bimodular NRPS phqB, to produce a monooxopiperazine intermediate. The reductase (R) domain of phqB utilizes NADPH for hydride transfer to reduce the thioester bond of the T domain-tethered linear dipeptide to a hemithioaminal intermediate, which spontaneously cleaves the C-S bond to release the aldehyde product. This compound undergoes spontaneous cyclization and dehydration to give a dienamine which is reverse prenylated at C-2 by the reverse prenyltransferase phqJ. The other prenyltransferase present in the cluster, phqI may be a redundant gene in the pathway. During biosynthetic assembly, the key step to produce the polycyclic core is catalyzed by the bifunctional reductase and intramolecular [4+2] Diels-Alderase, phqE, resulting in formation of the [2.2.2] diazaoctane intermediate preparaherquamide. Following formation of preparaherquamide, an indole 2,3-epoxidation-initiated pinacol-like rearrangement is catalyzed by the phqK FAD-dependent monooxygenase. The prenyltransferase phqA, the cytochrome P450 monooxygenase phqL, and the FAD-linked oxidoreductase phqH (or the cytochrome P450 monooxygenase phqM), are proposed to be involved in the formation of the pyran ring. The FAD-dependent monooxygenase phqK is likely responsible for generation of the spiro-oxindole, and the N-methylation is likely mediated by the phqN methyltransferase leading to the isolable natural product paraherquamide F. However, the order of these biosynthetic steps has still to be determined. In late-stage paraherquamide biosynthesis, the third P450 monooxygenase, phqO, is probably responsible for the C-14 hydroxylation, transforming paraherquamide F to paraherquamide G, and paraherquamide E to the final product paraherquamide A. The expansion from the 6-membered ring pyran (in paraherquamides F and G) to the 7-membered dioxepin ring (in paraherquamides A and E) represents a poorly understood but intriguing process that probably involves the 2-oxoglutarate-dependent dioxygenase phqC. Finally, the remaining members of the paraherquamide cluster, including phqI as well as phqM (or phqH), do not have a clearly prescribed role and appear to be redundant. This Penicillium fellutanum protein is Pyrroline-5-carboxylate reductase.